Reading from the N-terminus, the 1102-residue chain is MNHQQQQQQQKAGEQQLSEPEDMEMEAGDTDDPPRITQNPVINGNVALSDGHNTAEEDMEDDTSWRSEATFQFTVERFSRLSESVLSPPCFVRNLPWKIMVMPRFYPDRPHQKSVGFFLQCNAESDSTSWSCHAQAVLKIINYRDDEKSFSRRISHLFFHKENDWGFSNFMAWSEVTDPEKGFIDDDKVTFEVFVQADAPHGVAWDSKKHTGYVGLKNQGATCYMNSLLQTLFFTNQLRKAVYMMPTEGDDSSKSVPLALQRVFYELQHSDKPVGTKKLTKSFGWETLDSFMQHDVQELCRVLLDNVENKMKGTCVEGTIPKLFRGKMVSYIQCKEVDYRSDRREDYYDIQLSIKGKKNIFESFVDYVAVEQLDGDNKYDAGEHGLQEAEKGVKFLTLPPVLHLQLMRFMYDPQTDQNIKINDRFEFPEQLPLDEFLQKTDPKDPANYILHAVLVHSGDNHGGHYVVYLNPKGDGKWCKFDDDVVSRCTKEEAIEHNYGGHDDDLSVRHCTNAYMLVYIRESKLSEVLQAVTDHDIPQQLVERLQEEKRIEAQKRKERQEAHLYMQVQIVAEDQFCGHQGNDMYDEEKVKYTVFKVLKNSSLAEFVQSLSQTMGFPQDQIRLWPMQARSNGTKRPAMLDNEADGNKTMIELSDNENPWTIFLETVDPELAASGATLPKFDKDHDVMLFLKMYDPKTRSLNYCGHIYTPISCKIRDLLPVMCDRAGFIQDTSLILYEEVKPNLTERIQDYDVSLDKALDELMDGDIIVFQKDDPENDNSELPTAKEYFRDLYHRVDVIFCDKTIPNDPGFVVTLSNRMNYFQVAKTVAQRLNTDPMLLQFFKSQGYRDGPGNPLRHNYEGTLRDLLQFFKPRQPKKLYYQQLKMKITDFENRRSFKCIWLNSQFREEEITLYPDKHGCVRDLLEECKKAVELGEKASGKLRLLEIVSYKIIGVHQEDELLECLSPATSRTFRIEEIPLDQVDIDKENEMLVTVAHFHKEVFGTFGIPFLLRIHQGEHFREVMKRIQSLLDIQEKEFEKFKFAIVMMGRHQYINEDEYEVNLKDFEPQPGNMSHPRPWLGLDHFNKAPKRSRYTYLEKAIKIHN.

Over residues 1 to 10 the composition is skewed to low complexity; sequence MNHQQQQQQQ. Residues 1-38 form a disordered region; sequence MNHQQQQQQQKAGEQQLSEPEDMEMEAGDTDDPPRITQ. The interval 1–208 is interaction with TSPYL5; it reads MNHQQQQQQQ…APHGVAWDSK (208 aa). At Ser18 the chain carries Phosphoserine. A compositionally biased stretch (acidic residues) spans 19 to 31; it reads EPEDMEMEAGDTD. Ser49 carries the post-translational modification Phosphoserine. The segment at 53 to 208 is interaction with p53/TP53, MDM2 and EBNA1; that stretch reads NTAEEDMEDD…APHGVAWDSK (156 aa). In terms of domain architecture, MATH spans 68–195; the sequence is EATFQFTVER…DDKVTFEVFV (128 aa). The necessary for nuclear localization stretch occupies residues 70 to 205; that stretch reads TFQFTVERFS…QADAPHGVAW (136 aa). Residues 214-521 enclose the USP domain; sequence VGLKNQGATC…NAYMLVYIRE (308 aa). Cys223 functions as the Nucleophile in the catalytic mechanism. His464 acts as the Proton acceptor in catalysis. The segment at 622–801 is interaction with ICP0/VMW110; it reads LWPMQARSNG…HRVDVIFCDK (180 aa). An N6-acetyllysine; alternate modification is found at Lys869. A Glycyl lysine isopeptide (Lys-Gly) (interchain with G-Cter in SUMO2); alternate cross-link involves residue Lys869. Residue Lys869 forms a Glycyl lysine isopeptide (Lys-Gly) (interchain with G-Cter in ubiquitin); alternate linkage. Lys882 is covalently cross-linked (Glycyl lysine isopeptide (Lys-Gly) (interchain with G-Cter in SUMO2)). Ser963 carries the post-translational modification Phosphoserine. N6-acetyllysine occurs at positions 1084 and 1096.

It belongs to the peptidase C19 family. Monomer. Homodimer. Part of a complex with DAXX, MDM2, RASSF1 and USP7. Part of a complex with DAXX, MDM2 and USP7. Interacts with MDM2; the interaction is independent of p53/TP53. Interacts with DAXX; the interaction is direct and independent of MDM2 and p53/TP53. Component of a complex composed of KMT2E/MLL5 (isoform 3), OGT (isoform 1) and USP7; the complex stabilizes KMT2E/MLL5, preventing KMT2E/MLL5 ubiquitination and proteasomal-mediated degradation. Interacts (via MATH domain) with KMT2E/MLL5 isoform 3. Interacts with OGT isoform 1. Interacts with FOXO4; the interaction is enhanced in presence of hydrogen peroxide and occurs independently of p53/TP53. Interacts with p53/TP53; the interaction is enhanced in response to DNA damage. Interacts with TSPYL5; this impairs interaction with p53/TP53. Interacts with PTEN; the interaction is direct. Interacts with ATXN1 and the strength of interaction is influenced by the length of the poly-Gln region in ATXN1. A weaker interaction seen with mutants having longer poly-Gln regions. Interacts with KIAA1530/UVSSA. Interacts with ABRAXAS2; the interaction is direct. Identified in a complex with TP53/p53 and ABRAXAS2. Interacts with MEX3C and antagonizes its ability to degrade mRNA. Interacts with DNMT1 and UHRF1. Interacts with FOXP3. Interacts (via MATH domain) with RNF220. Associated component of the Polycomb group (PcG) multiprotein PRC1-like complex. Interacts with EPOP. Interacts with OTUD4 and USP9X; the interaction is direct. Interacts with CRY2. Interacts with REST. Interacts with ERCC6. Part of a complex consisting of USP7, MAGEL2 and TRIM27; directly interacts with MAGEL2; directly interacts with TRIM27. In terms of assembly, (Microbial infection) Isoform 1 and isoform 2 interact with herpesvirus 1 trans-acting transcriptional protein ICP0/VMW110. Binding to ICP0/VMW110 may modulate the substrate specificity or activity of USP7 to stabilize viral proteins. As to quaternary structure, (Microbial infection) Interacts with Epstein-Barr virus EBNA1; the interaction is independent and simultaneous to EBNA1 interaction with USP7 as well as necessary for PML nuclear bodies disruption by EBNA1. EBNA1, USP7 and CSNK2B form a ternary complex. EBNA1 shows a 10-fold higher affinity than p53/TP53 and can compete with it for USP7 binding. (Microbial infection) Interacts with human cytomegalovirus proteins UL35 and UL35A; these interactions inhibit the ability of USP7 to form nuclear bodies. In terms of assembly, (Microbial infection) Interacts with herpes virus 8/HHV-8 proteins vIRF-1 and vIRF-3; these interactions may disrupt TP53 signaling pathway during viral infection by decreasing the availability of USP7 for deubiquitinating and stabilizing TP53. As to quaternary structure, (Microbial infection) Interacts with herpes virus 8/HHV-8 protein vIRF-2; this interaction modulates antiviral signaling via disruption of USP7 interactions with innate immune signaling proteins TRAF3 and TRAF6 thus affecting their ubiquitination. Post-translationally, isoform 1: Phosphorylated. Isoform 1 is phosphorylated at positions Ser-18 and Ser-963. Isoform 2: Not phosphorylated. Isoform 1: Polyneddylated. Isoform 2: Not Polyneddylated. In terms of processing, isoform 1 and isoform 2: Not sumoylated. Post-translationally, isoform 1 and isoform 2: Polyubiquitinated by herpesvirus 1 trans-acting transcriptional protein ICP0/VMW110; leading to its subsequent proteasomal degradation. Isoform 1: Ubiquitinated at Lys-869. As to expression, expressed in neural progenitor cells (at protein level). Widely expressed. Overexpressed in prostate cancer.

Its subcellular location is the nucleus. The protein resides in the cytoplasm. It is found in the PML body. It localises to the chromosome. It catalyses the reaction Thiol-dependent hydrolysis of ester, thioester, amide, peptide and isopeptide bonds formed by the C-terminal Gly of ubiquitin (a 76-residue protein attached to proteins as an intracellular targeting signal).. Inhibited by N-ethyl-maleimide (NEM) and divalent cations. Tolerates high concentrations of NaCl but is inhibited at concentrations of 195 mM and higher. Hydrolase that deubiquitinates target proteins such as ARMC5, FOXO4, DEPTOR, KAT5, p53/TP53, MDM2, ERCC6, DNMT1, UHRF1, PTEN, KMT2E/MLL5 and DAXX. Together with DAXX, prevents MDM2 self-ubiquitination and enhances the E3 ligase activity of MDM2 towards p53/TP53, thereby promoting p53/TP53 ubiquitination and proteasomal degradation. Deubiquitinates p53/TP53, preventing degradation of p53/TP53, and enhances p53/TP53-dependent transcription regulation, cell growth repression and apoptosis. Deubiquitinates p53/TP53 and MDM2 and strongly stabilizes p53/TP53 even in the presence of excess MDM2, and also induces p53/TP53-dependent cell growth repression and apoptosis. Deubiquitination of FOXO4 in presence of hydrogen peroxide is not dependent on p53/TP53 and inhibits FOXO4-induced transcriptional activity. In association with DAXX, is involved in the deubiquitination and translocation of PTEN from the nucleus to the cytoplasm, both processes that are counteracted by PML. Deubiquitinates KMT2E/MLL5 preventing KMT2E/MLL5 proteasomal-mediated degradation. Involved in cell proliferation during early embryonic development. Involved in transcription-coupled nucleotide excision repair (TC-NER) in response to UV damage: recruited to DNA damage sites following interaction with KIAA1530/UVSSA and promotes deubiquitination of ERCC6, preventing UV-induced degradation of ERCC6. Involved in maintenance of DNA methylation via its interaction with UHRF1 and DNMT1: acts by mediating deubiquitination of UHRF1 and DNMT1, preventing their degradation and promoting DNA methylation by DNMT1. Deubiquitinates alkylation repair enzyme ALKBH3. OTUD4 recruits USP7 and USP9X to stabilize ALKBH3, thereby promoting the repair of alkylated DNA lesions. Acts as a chromatin regulator via its association with the Polycomb group (PcG) multiprotein PRC1-like complex; may act by deubiquitinating components of the PRC1-like complex. Able to mediate deubiquitination of histone H2B; it is however unsure whether this activity takes place in vivo. Exhibits a preference towards 'Lys-48'-linked ubiquitin chains. Increases regulatory T-cells (Treg) suppressive capacity by deubiquitinating and stabilizing the transcription factor FOXP3 which is crucial for Treg cell function. Plays a role in the maintenance of the circadian clock periodicity via deubiquitination and stabilization of the CRY1 and CRY2 proteins. Deubiquitinates REST, thereby stabilizing REST and promoting the maintenance of neural progenitor cells. Deubiquitinates SIRT7, inhibiting SIRT7 histone deacetylase activity and regulating gluconeogenesis. Involved in the regulation of WASH-dependent actin polymerization at the surface of endosomes and the regulation of endosomal protein recycling. It maintains optimal WASH complex activity and precise F-actin levels via deubiquitination of TRIM27 and WASHC1. Mediates the deubiquitination of phosphorylated DEPTOR, promoting its stability and leading to decreased mTORC1 signaling. Functionally, (Microbial infection) Contributes to the overall stabilization and trans-activation capability of the herpesvirus 1 trans-acting transcriptional protein ICP0/VMW110 during HSV-1 infection. In terms of biological role, (Microbial infection) Upon infection with Epstein-Barr virus, the interaction with viral EBNA1 increases the association of USP7 with PML proteins, which is required for the polyubiquitylation and degradation of PML. The protein is Ubiquitin carboxyl-terminal hydrolase 7 of Homo sapiens (Human).